The chain runs to 178 residues: Endoribonuclease YbeY (178 aa).

Zn(2+) is bound by residues His-118, His-122, and His-128.

It belongs to the endoribonuclease YbeY family. Zn(2+) serves as cofactor.

The protein resides in the cytoplasm. In terms of biological role, single strand-specific metallo-endoribonuclease involved in late-stage 70S ribosome quality control and in maturation of the 3' terminus of the 16S rRNA. This is Endoribonuclease YbeY from Mycobacterium leprae (strain Br4923).